A 190-amino-acid polypeptide reads, in one-letter code: NADH-quinone oxidoreductase subunit B (190 aa).

The [4Fe-4S] cluster site is built by Cys69, Cys70, Cys134, and Cys164.

It belongs to the complex I 20 kDa subunit family. In terms of assembly, NDH-1 is composed of 14 different subunits. Subunits NuoB, C, D, E, F, and G constitute the peripheral sector of the complex. The cofactor is [4Fe-4S] cluster.

It is found in the cell inner membrane. The catalysed reaction is a quinone + NADH + 5 H(+)(in) = a quinol + NAD(+) + 4 H(+)(out). In terms of biological role, NDH-1 shuttles electrons from NADH, via FMN and iron-sulfur (Fe-S) centers, to quinones in the respiratory chain. Couples the redox reaction to proton translocation (for every two electrons transferred, four hydrogen ions are translocated across the cytoplasmic membrane), and thus conserves the redox energy in a proton gradient. The protein is NADH-quinone oxidoreductase subunit B of Chelativorans sp. (strain BNC1).